The chain runs to 210 residues: Transmembrane protein 61 (210 aa).

The next 2 helical transmembrane spans lie at 18–38 and 69–89; these read YCMT…FAWW and VSFV…LWSV. The disordered stretch occupies residues 140 to 172; the sequence is VAEGPPTPPAYPTEEALEPSGSRDALLSTQPAW.

Its subcellular location is the membrane. The sequence is that of Transmembrane protein 61 (TMEM61) from Homo sapiens (Human).